The sequence spans 756 residues: ATP-dependent zinc metalloprotease FtsH (756 aa).

The Cytoplasmic segment spans residues Met-1–Ser-44. The chain crosses the membrane as a helical span at residues Trp-45–Thr-65. Over Gln-66–Ser-148 the chain is Extracellular. Residues Phe-149–Phe-169 traverse the membrane as a helical segment. The Cytoplasmic segment spans residues Leu-170–Gly-756. Gly-241–Thr-248 contributes to the ATP binding site. His-463 serves as a coordination point for Zn(2+). Glu-464 is an active-site residue. Positions 467 and 539 each coordinate Zn(2+). Composition is skewed to basic and acidic residues over residues Pro-647–Asp-662 and Leu-672–Glu-681. Positions Pro-647–Gly-756 are disordered. 2 stretches are compositionally biased toward low complexity: residues Ala-684–Ala-703 and Pro-713–Ala-724. Positions Gly-744–Gly-756 are enriched in polar residues.

It in the central section; belongs to the AAA ATPase family. In the C-terminal section; belongs to the peptidase M41 family. As to quaternary structure, homohexamer. The cofactor is Zn(2+).

The protein localises to the cell membrane. Acts as a processive, ATP-dependent zinc metallopeptidase for both cytoplasmic and membrane proteins. Plays a role in the quality control of integral membrane proteins. In Rothia mucilaginosa (strain DY-18) (Stomatococcus mucilaginosus), this protein is ATP-dependent zinc metalloprotease FtsH.